Reading from the N-terminus, the 204-residue chain is MDYEIENNHADSIRRGSIEVICGSMFSGKTEELLRRLRRAKIARQTVEIFKPTIDIRYDETDVVSHDKNAIASTPVDNSANILLLSSQVDVVGIDEAQFFDEGLVEVAQQLADQGVRVVIAGLDMDFRRQPFGPMPGLCAIADSVTKVHAVCVECGRLASYSFRRVQGDQQVMLGELNEYSPLCRTCYRKCSSPPQTEEIHSTI.

Residues 23 to 30 (GSMFSGKT) and 95 to 98 (DEAQ) contribute to the ATP site. Glutamate 96 serves as the catalytic Proton acceptor. Residues cysteine 152, cysteine 155, cysteine 184, and cysteine 187 each coordinate Zn(2+).

This sequence belongs to the thymidine kinase family. Homotetramer.

It localises to the cytoplasm. It carries out the reaction thymidine + ATP = dTMP + ADP + H(+). This Porphyromonas gingivalis (strain ATCC BAA-308 / W83) protein is Thymidine kinase.